Reading from the N-terminus, the 290-residue chain is Thymidylate synthase (290 aa).

DUMP contacts are provided by residues arginine 27 and 152-153 (RR). The Nucleophile role is filled by cysteine 172. Residues 192-195 (RSAD), asparagine 203, and 233-235 (HVY) each bind dUMP. A (6R)-5,10-methylene-5,6,7,8-tetrahydrofolate-binding site is contributed by aspartate 195. Residue alanine 289 participates in (6R)-5,10-methylene-5,6,7,8-tetrahydrofolate binding.

The protein belongs to the thymidylate synthase family. As to quaternary structure, homodimer.

It carries out the reaction dUMP + (6R)-5,10-methylene-5,6,7,8-tetrahydrofolate = 7,8-dihydrofolate + dTMP. The protein operates within pyrimidine metabolism; dTTP biosynthesis. The chain is Thymidylate synthase (TS) from Ateles.